The sequence spans 382 residues: MKITRLTTYHAAPRWLFLKVETDEGITGWGEPVIEGRARSVEAAVHELAGYVVGKDPARINDLWQTMYRAGFYRGGAILMSAIAGIDQALWDIKGKALGVPVYELLGGLVRDRMKTYRWVGGDRPGAIIAQINDYRALGFDTFKFNGTEEMKLIDSARAVDAAVVKVAEIRETFGNSIDFGIDFHGRVGAPMAKALLRELEPFKPLFVEEPVLAEQAEYYPRLAASTCIPLAAGERMFSRFEFKNVLCAGGIGMVQPDLSHAGGITECVKIAAMAEAYDVGFAPHCPLGPIALAACLHVDFVSHNAVLQEQSIGIHYNEGADLLDYVINKEDFHCVDGSIAALPKPGLGVEINEDMLKRANENPPDWRNPVWRHADGSIAEW.

Asp183 serves as a coordination point for Mg(2+). The active-site Proton donor is the His185. Mg(2+) is bound by residues Glu209 and Glu235. His285 functions as the Proton acceptor in the catalytic mechanism.

It belongs to the mandelate racemase/muconate lactonizing enzyme family. GalD subfamily. Mg(2+) is required as a cofactor.

The enzyme catalyses D-galactonate = 2-dehydro-3-deoxy-D-galactonate + H2O. The protein operates within carbohydrate acid metabolism; D-galactonate degradation; D-glyceraldehyde 3-phosphate and pyruvate from D-galactonate: step 1/3. Functionally, catalyzes the dehydration of D-galactonate to 2-keto-3-deoxy-D-galactonate. In Xanthomonas campestris pv. campestris (strain 8004), this protein is D-galactonate dehydratase.